The primary structure comprises 274 residues: Bis(5'-nucleosyl)-tetraphosphatase, symmetrical (274 aa).

Belongs to the Ap4A hydrolase family.

It catalyses the reaction P(1),P(4)-bis(5'-adenosyl) tetraphosphate + H2O = 2 ADP + 2 H(+). Its function is as follows. Hydrolyzes diadenosine 5',5'''-P1,P4-tetraphosphate to yield ADP. This chain is Bis(5'-nucleosyl)-tetraphosphatase, symmetrical, found in Shewanella baltica (strain OS155 / ATCC BAA-1091).